Consider the following 334-residue polypeptide: Holliday junction branch migration complex subunit RuvB (334 aa).

The tract at residues 4–184 (ADRLIQPQDL…FGIPLRLEFY (181 aa)) is large ATPase domain (RuvB-L). ATP is bound by residues R24, G65, K68, T69, T70, 131 to 133 (EDY), R174, Y184, and R221. Residue T69 coordinates Mg(2+). A small ATPAse domain (RuvB-S) region spans residues 185-255 (NVRDLSSIVA…VAQSALDLLD (71 aa)). The segment at 258 to 334 (SEGFDYMDRK…YSHFDLIKPD (77 aa)) is head domain (RuvB-H). Positions 294, 313, and 318 each coordinate DNA.

Belongs to the RuvB family. As to quaternary structure, homohexamer. Forms an RuvA(8)-RuvB(12)-Holliday junction (HJ) complex. HJ DNA is sandwiched between 2 RuvA tetramers; dsDNA enters through RuvA and exits via RuvB. An RuvB hexamer assembles on each DNA strand where it exits the tetramer. Each RuvB hexamer is contacted by two RuvA subunits (via domain III) on 2 adjacent RuvB subunits; this complex drives branch migration. In the full resolvosome a probable DNA-RuvA(4)-RuvB(12)-RuvC(2) complex forms which resolves the HJ.

The protein resides in the cytoplasm. The enzyme catalyses ATP + H2O = ADP + phosphate + H(+). The RuvA-RuvB-RuvC complex processes Holliday junction (HJ) DNA during genetic recombination and DNA repair, while the RuvA-RuvB complex plays an important role in the rescue of blocked DNA replication forks via replication fork reversal (RFR). RuvA specifically binds to HJ cruciform DNA, conferring on it an open structure. The RuvB hexamer acts as an ATP-dependent pump, pulling dsDNA into and through the RuvAB complex. RuvB forms 2 homohexamers on either side of HJ DNA bound by 1 or 2 RuvA tetramers; 4 subunits per hexamer contact DNA at a time. Coordinated motions by a converter formed by DNA-disengaged RuvB subunits stimulates ATP hydrolysis and nucleotide exchange. Immobilization of the converter enables RuvB to convert the ATP-contained energy into a lever motion, pulling 2 nucleotides of DNA out of the RuvA tetramer per ATP hydrolyzed, thus driving DNA branch migration. The RuvB motors rotate together with the DNA substrate, which together with the progressing nucleotide cycle form the mechanistic basis for DNA recombination by continuous HJ branch migration. Branch migration allows RuvC to scan DNA until it finds its consensus sequence, where it cleaves and resolves cruciform DNA. The protein is Holliday junction branch migration complex subunit RuvB of Shewanella amazonensis (strain ATCC BAA-1098 / SB2B).